Here is a 347-residue protein sequence, read N- to C-terminus: NADH-ubiquinone oxidoreductase chain 2 (347 aa).

A run of 9 helical transmembrane segments spans residues 3–23 (PMTF…VMMS), 59–79 (YFLT…INLL), 89–109 (LINP…LGLA), 150–170 (NLNI…WGGL), 178–198 (IMAY…MYNP), 201–221 (MLLN…LLMI), 237–257 (LPLI…LPPL), 276–296 (IILS…YTRI), and 326–346 (LPLM…TAIL).

This sequence belongs to the complex I subunit 2 family. As to quaternary structure, core subunit of respiratory chain NADH dehydrogenase (Complex I) which is composed of 45 different subunits. Interacts with TMEM242.

It is found in the mitochondrion inner membrane. It carries out the reaction a ubiquinone + NADH + 5 H(+)(in) = a ubiquinol + NAD(+) + 4 H(+)(out). Core subunit of the mitochondrial membrane respiratory chain NADH dehydrogenase (Complex I) which catalyzes electron transfer from NADH through the respiratory chain, using ubiquinone as an electron acceptor. Essential for the catalytic activity and assembly of complex I. In Nyctophilus arnhemensis (Northern long-eared bat), this protein is NADH-ubiquinone oxidoreductase chain 2.